The chain runs to 79 residues: Small ribosomal subunit protein bS16 (79 aa).

This sequence belongs to the bacterial ribosomal protein bS16 family.

This chain is Small ribosomal subunit protein bS16, found in Buchnera aphidicola subsp. Acyrthosiphon pisum (strain 5A).